We begin with the raw amino-acid sequence, 22 residues long: Brevinin-1OKd (22 aa).

A Lysine amide modification is found at Lys22.

As to expression, expressed by the skin glands.

Its subcellular location is the secreted. In terms of biological role, antimicrobial peptide. The polypeptide is Brevinin-1OKd (Nidirana okinavana (Kampira Falls frog)).